A 268-amino-acid chain; its full sequence is Inositol polyphosphate multikinase (268 aa).

ATP contacts are provided by residues Lys27, 86–88, and Asp99; that span reads ENI. 127–135 lines the substrate pocket; it reads TSGSLGFRI. Asp235 is an ATP binding site.

The protein belongs to the inositol phosphokinase (IPK) family.

It localises to the cytoplasm. The protein resides in the nucleus. The enzyme catalyses 1D-myo-inositol 1,4,5-trisphosphate + 2 ATP = 1D-myo-inositol 1,3,4,5,6-pentakisphosphate + 2 ADP + 2 H(+). It catalyses the reaction 1D-myo-inositol 1,4,5-trisphosphate + ATP = 1D-myo-inositol 1,4,5,6-tetrakisphosphate + ADP + H(+). The catalysed reaction is 1D-myo-inositol 1,4,5-trisphosphate + ATP = 1D-myo-inositol 1,3,4,5-tetrakisphosphate + ADP + H(+). It carries out the reaction 1D-myo-inositol 1,4,5,6-tetrakisphosphate + ATP = 1D-myo-inositol 1,3,4,5,6-pentakisphosphate + ADP + H(+). In terms of biological role, inositol phosphate kinase with both monophosphoinositol and diphosphoinositol polyphosphate synthase activities. Able to phosphorylate inositol 1,4,5-trisphosphate (Ins(1,4,5)P3) on both the carbon-3 and carbon-6 positions to synthesize inositol 1,3,4,5-tetrakisphosphate (Ins(1,3,4,5)P4) and inositol 1,4,5,6-tetrakisphosphate (Ins(1,4,5,6)P4), and then to subsequently phosphorylate and convert either isomer of InsP4 to inositol 1,3,4,5,6-pentakisphosphate (Ins(1,3,4,5,6)P5). Also converts (Ins(1,3,4,5,6)P5) to InsP6. Also has a role in transcription regulation. The catalytic activity is required for PHO gene repression by phosphate and for NCR gene activation in response to nitrogen availability, indicating a role for inositol pyrophosphates in these controls. Inositol polyphosphates may be involved in the regulation of chromatin remodeling of transcription. This Schizosaccharomyces pombe (strain 972 / ATCC 24843) (Fission yeast) protein is Inositol polyphosphate multikinase (arg82).